The sequence spans 81 residues: Conotoxin Im016 (81 aa).

A signal peptide spans 1–21 (MSTLGMMLLILLLLVPLATFA). A propeptide spanning residues 22–31 (DDGPTMRGHR) is cleaved from the precursor.

This sequence belongs to the conotoxin N superfamily. Contains 5 disulfide bonds. In terms of tissue distribution, expressed by the venom duct.

It localises to the secreted. Probable neurotoxin. This chain is Conotoxin Im016, found in Conus imperialis (Imperial cone).